Here is a 643-residue protein sequence, read N- to C-terminus: Probable extracellular metalloproteinase 4 (643 aa).

The signal sequence occupies residues 1–18 (MHGLLLAGLLALPLNVFA). Positions 19-254 (HPTESHSSGV…VHSVVDYVSA (236 aa)) are excised as a propeptide. Residues 49–69 (SDAVPKQDGESFTTSSTGDDN) are disordered. Over residues 58–69 (ESFTTSSTGDDN) the composition is skewed to polar residues. N-linked (GlcNAc...) asparagine glycans are attached at residues N271 and N420. A Zn(2+)-binding site is contributed by H437. E438 is an active-site residue. H441 provides a ligand contact to Zn(2+). Residues N603 and N629 are each glycosylated (N-linked (GlcNAc...) asparagine).

Belongs to the peptidase M36 family. Zn(2+) serves as cofactor.

The protein localises to the secreted. In terms of biological role, secreted metalloproteinase probably acting as a virulence factor. This is Probable extracellular metalloproteinase 4 (MEP4) from Trichophyton verrucosum (strain HKI 0517).